Here is a 118-residue protein sequence, read N- to C-terminus: UPF0102 protein ROP_66030 (118 aa).

This sequence belongs to the UPF0102 family.

The polypeptide is UPF0102 protein ROP_66030 (Rhodococcus opacus (strain B4)).